The chain runs to 517 residues: Crotonobetaine/carnitine--CoA ligase (517 aa).

It belongs to the ATP-dependent AMP-binding enzyme family.

The enzyme catalyses 4-(trimethylamino)butanoate + ATP + CoA = 4-(trimethylamino)butanoyl-CoA + AMP + diphosphate. The catalysed reaction is crotonobetaine + ATP + CoA = crotonobetainyl-CoA + AMP + diphosphate. It carries out the reaction (R)-carnitine + ATP + CoA = (R)-carnitinyl-CoA + AMP + diphosphate. The protein operates within amine and polyamine metabolism; carnitine metabolism. Catalyzes the transfer of CoA to carnitine, generating the initial carnitinyl-CoA needed for the CaiB reaction cycle. Also has activity toward crotonobetaine and gamma-butyrobetaine. The sequence is that of Crotonobetaine/carnitine--CoA ligase from Salmonella agona (strain SL483).